A 441-amino-acid polypeptide reads, in one-letter code: MFVVAAGLNHRTAPVAIREQLAFARHGLPPALCRLKEEAGVEGCVILSTCNRTEVYIACNQEEAGLKAAKNFLGRSCKLALADLEGYLYTLNTHHAVRHLFRVAAGLDSMILGEDQVLAQVAEAYQVARETGTTNNVLNTLWQQAIYAGKRVRTETRIDANTVSVSYAAVELARQVFHDELDGRTVLVIGAGKMSTLAARYLKDKGVTTVLVSNRSYDRAVALAATIGGQAVRLDALEDYLPRADIVISCTAASHYILHRDQVARAVAARPGVPLMLIDIAVPRDIEPAAGDLPGVKLYDIDDLQQVVLANLEERKKAARQAEGIIAAEAEAFFQWLGSLYVVPTIVALKEKAEAIKNAEVRRACNRLGQLTTREQKIITSMATTIVNQLLHDAIVNLKAAALTPRGHLYVEALQELFELRVDHTLPGPDMAVSVEGGRKY.

Substrate-binding positions include 49–52 (TCNR), S109, 114–116 (EDQ), and Q120. Residue C50 is the Nucleophile of the active site. 190-195 (GAGKMS) contacts NADP(+).

The protein belongs to the glutamyl-tRNA reductase family. In terms of assembly, homodimer.

The enzyme catalyses (S)-4-amino-5-oxopentanoate + tRNA(Glu) + NADP(+) = L-glutamyl-tRNA(Glu) + NADPH + H(+). It functions in the pathway porphyrin-containing compound metabolism; protoporphyrin-IX biosynthesis; 5-aminolevulinate from L-glutamyl-tRNA(Glu): step 1/2. Its function is as follows. Catalyzes the NADPH-dependent reduction of glutamyl-tRNA(Glu) to glutamate 1-semialdehyde (GSA). The sequence is that of Glutamyl-tRNA reductase from Moorella thermoacetica (strain ATCC 39073 / JCM 9320).